The sequence spans 586 residues: Eukaryotic translation initiation factor 3 subunit D (586 aa).

The disordered stretch occupies residues 102–176 (SAKRTFGRGG…DKPQRTREPS (75 aa)). The span at 162–174 (GWKDYDKPQRTRE) shows a compositional bias: basic and acidic residues. The interval 301–315 (SLDLVTVNENAADAP) is RNA gate. The disordered stretch occupies residues 567–586 (EEEEEVAAEEQEAAEEEAEE).

It belongs to the eIF-3 subunit D family. As to quaternary structure, component of the eukaryotic translation initiation factor 3 (eIF-3) complex.

The protein resides in the cytoplasm. Functionally, mRNA cap-binding component of the eukaryotic translation initiation factor 3 (eIF-3) complex, which is involved in protein synthesis of a specialized repertoire of mRNAs and, together with other initiation factors, stimulates binding of mRNA and methionyl-tRNAi to the 40S ribosome. The eIF-3 complex specifically targets and initiates translation of a subset of mRNAs involved in cell proliferation. In the eIF-3 complex, eif3d specifically recognizes and binds the 7-methylguanosine cap of a subset of mRNAs. The protein is Eukaryotic translation initiation factor 3 subunit D of Aspergillus niger (strain ATCC MYA-4892 / CBS 513.88 / FGSC A1513).